The sequence spans 119 residues: Large ribosomal subunit protein bL20 (119 aa).

The protein belongs to the bacterial ribosomal protein bL20 family.

In terms of biological role, binds directly to 23S ribosomal RNA and is necessary for the in vitro assembly process of the 50S ribosomal subunit. It is not involved in the protein synthesizing functions of that subunit. The sequence is that of Large ribosomal subunit protein bL20 from Teredinibacter turnerae (strain ATCC 39867 / T7901).